Consider the following 379-residue polypeptide: MSMAPIVLAAGGTGGHLFPAEALARELLERGHRVVLVTDVRGTAFGDALREVPVHRIRSATLGGGLLGKARTALELGIGTLQARRLLSRLEPAIVVGFGGYPSFPAVYAAAGLRIPVAIHEQNAVMGRANRMLARRARLICTSFPEVQGMDNVDRARAVRTGNPVRPAVLALRDRPYEAPLPGGSLDILVTGGSQGATVFGEIVPRAVAMLPEDLRLRLGIVQQARAENLQAARDGYAALGVQATLAPFFRDLPERLARCHLMIGRAGASTVAELTVAGRPSILVPYPHATDDHQTANARAVAAAGGAWIMPQPEFTAEALAARLTALLTDPAPLAPAAAAAAAWGLPDAARRLADAVLGAAGLGNGRSTPDSQMRAAE.

Residues 13 to 15 (TGG), Asn123, Arg166, Ser194, and Gln295 each bind UDP-N-acetyl-alpha-D-glucosamine.

Belongs to the glycosyltransferase 28 family. MurG subfamily.

It is found in the cell inner membrane. The catalysed reaction is di-trans,octa-cis-undecaprenyl diphospho-N-acetyl-alpha-D-muramoyl-L-alanyl-D-glutamyl-meso-2,6-diaminopimeloyl-D-alanyl-D-alanine + UDP-N-acetyl-alpha-D-glucosamine = di-trans,octa-cis-undecaprenyl diphospho-[N-acetyl-alpha-D-glucosaminyl-(1-&gt;4)]-N-acetyl-alpha-D-muramoyl-L-alanyl-D-glutamyl-meso-2,6-diaminopimeloyl-D-alanyl-D-alanine + UDP + H(+). It functions in the pathway cell wall biogenesis; peptidoglycan biosynthesis. Its function is as follows. Cell wall formation. Catalyzes the transfer of a GlcNAc subunit on undecaprenyl-pyrophosphoryl-MurNAc-pentapeptide (lipid intermediate I) to form undecaprenyl-pyrophosphoryl-MurNAc-(pentapeptide)GlcNAc (lipid intermediate II). In Rhodospirillum centenum (strain ATCC 51521 / SW), this protein is UDP-N-acetylglucosamine--N-acetylmuramyl-(pentapeptide) pyrophosphoryl-undecaprenol N-acetylglucosamine transferase.